Here is a 337-residue protein sequence, read N- to C-terminus: MASIHRPKRGSLAFSPRKRAKSHIPRFRAWPEATGEPKLQSFAGYKVGMTHVIMVDDTKNSLTQGMEISVPVTVIETPAIRVAAIRAYAEDSTGEKAIAEVWAADLDPELKRRIPIPAAGNQAEALENIGKLIEEGRVSDVRAVIYTLPKSLTGVPKKVPDIMESGISARDLGTKFEYSKTILGTLVSVTDVFKNGTLVDTAAITIGKGTQGPVKRWGIQLMKGKHSRQGSLRQVGTLGAFNPSRVSWRVPQMGQMGYHQRTEFNKRILKIGSDGEEVTPEGGFINYGLVRGDYILIKGSVPGPSKRLIRLRDPIRAKKADLGEPNILYISRESKQG.

Residues 1-20 form a disordered region; that stretch reads MASIHRPKRGSLAFSPRKRA.

The protein belongs to the universal ribosomal protein uL3 family. As to quaternary structure, part of the 50S ribosomal subunit. Forms a cluster with proteins L14 and L24e.

One of the primary rRNA binding proteins, it binds directly near the 3'-end of the 23S rRNA, where it nucleates assembly of the 50S subunit. This is Large ribosomal subunit protein uL3 from Methanosarcina acetivorans (strain ATCC 35395 / DSM 2834 / JCM 12185 / C2A).